A 649-amino-acid chain; its full sequence is uncharacterized protein (649 aa).

It is found in the nucleus. Its subcellular location is the cytoplasm. This is an uncharacterized protein from Schizosaccharomyces pombe (strain 972 / ATCC 24843) (Fission yeast).